The sequence spans 499 residues: Zinc finger protein PLAG1 (499 aa).

Residues 1–33 (MATVIPGDLSEVRDTQKAPSGKRKRGESKPRKN) form a disordered region. The segment at 2–84 (ATVIPGDLSE…SKYKLQRHMA (83 aa)) is interaction with KPNA2. The short motif at 22–25 (KRKR) is the Nuclear localization signal element. 7 consecutive C2H2-type zinc fingers follow at residues 34-56 (FPCQ…SFSH), 62-86 (YKCT…MATH), 92-114 (HKCN…LHTH), 121-143 (FKCE…LALH), 150-172 (LTCK…LKSH), 185-207 (HQCE…MVVH), and 213-236 (FLCQ…KKSH). Residues 41–242 (KAFNSVEKLK…KKSHNQELLK (202 aa)) are decreased nuclear import with localization in the nucleus but also in the cytoplasm. The repression domain; contains 3 sumoylation motifs and massively decrease transcription activity stretch occupies residues 243–383 (VKTEPVDFLD…SPASSSKLGL (141 aa)). Residues 243-499 (VKTEPVDFLD…TLPRFHQAFQ (257 aa)) form an activates transcription; Inhibition of nuclear import due to lack of NLS and KPNA2 interaction region. Glycyl lysine isopeptide (Lys-Gly) (interchain with G-Cter in SUMO) cross-links involve residues lysine 244 and lysine 263. The span at 365–379 (GGAPSSSQDSPASSS) shows a compositional bias: low complexity. Positions 365-400 (GGAPSSSQDSPASSSKLGLEPQSGSPDDGAGDLSLS) are disordered. Residues 384–499 (EPQSGSPDDG…TLPRFHQAFQ (116 aa)) form a massively activates transcription region.

This sequence belongs to the krueppel C2H2-type zinc-finger protein family. In terms of assembly, interacts with KPNA2, which escorts protein to the nucleus via interaction with nuclear localization signal. Interacts with E3 SUMO-protein ligase PIAS1, PIAS2 and PIAS4. Post-translationally, sumoylated with SUMO1; which inhibits transcriptional activity, but does not affect nuclear localization. Blockers of sumoylation pathway such as SENP3 and inactive UBE2I increases transcriptional capacity. Sumoylation is increased in the presence of PIAS1. In terms of processing, acetylated by lysine acetyltransferase EP300; which activates transcriptional capacity. Lysine residues that are sumoylated also seem to be target for acetylation. As to expression, expressed in heart, spleen, lung, kidney, brain, testis and epididymis but not in salivary glands.

It localises to the nucleus. Transcription factor whose activation results in up-regulation of target genes, such as IGFII, leading to uncontrolled cell proliferation: when overexpressed in cultured cells, higher proliferation rate and transformation are observed. Other target genes such as CRLF1, CRABP2, CRIP2, PIGF are strongly induced in cells with PLAG1 induction. Proto-oncogene whose ectopic expression can trigger the development of pleomorphic adenomas of the salivary gland and lipoblastomas. Cooperates with CBFB-MYH11. The chain is Zinc finger protein PLAG1 (Plag1) from Mus musculus (Mouse).